Consider the following 292-residue polypeptide: MRAIWTGAITFGLVNVPVKVYSATEDHDVPLQPLHAADGGRIRYQRRCEIDGKVIPYEDIARAYDDGERMVVLTPEDLASLPAERSREIDVVEFVPDEQLDPLTFDRSYYLEPDSRSVKAYALLRTTLEDGCRTAIVTVALRQKTRLGALRVRGNLLVLQTLLWHDEIRAAAFPSLETVPPITERELALSSALMESFAGDFQPETFADEYQEELRKLIAAKIEQGESVDVAETFGEGAAPAGGGAVIDLMEALQRSVERSGGKAASAFPAAEKAPAGKNAATASAKKARKLA.

The 179-residue stretch at 9 to 187 folds into the Ku domain; that stretch reads ITFGLVNVPV…TVPPITEREL (179 aa). A compositionally biased stretch (low complexity) spans 264–285; it reads AASAFPAAEKAPAGKNAATASA. The disordered stretch occupies residues 264–292; it reads AASAFPAAEKAPAGKNAATASAKKARKLA.

This sequence belongs to the prokaryotic Ku family. In terms of assembly, homodimer. Interacts with LigD.

Its function is as follows. With LigD forms a non-homologous end joining (NHEJ) DNA repair enzyme, which repairs dsDNA breaks with reduced fidelity. Binds linear dsDNA with 5'- and 3'- overhangs but not closed circular dsDNA nor ssDNA. Recruits and stimulates the ligase activity of LigD. The chain is Non-homologous end joining protein Ku from Leifsonia xyli subsp. xyli (strain CTCB07).